Here is a 435-residue protein sequence, read N- to C-terminus: ATP-dependent protease ATPase subunit HslU (435 aa).

ATP-binding positions include I18, 60–65 (GVGKTE), D248, E313, and R385.

This sequence belongs to the ClpX chaperone family. HslU subfamily. As to quaternary structure, a double ring-shaped homohexamer of HslV is capped on each side by a ring-shaped HslU homohexamer. The assembly of the HslU/HslV complex is dependent on binding of ATP.

It localises to the cytoplasm. In terms of biological role, ATPase subunit of a proteasome-like degradation complex; this subunit has chaperone activity. The binding of ATP and its subsequent hydrolysis by HslU are essential for unfolding of protein substrates subsequently hydrolyzed by HslV. HslU recognizes the N-terminal part of its protein substrates and unfolds these before they are guided to HslV for hydrolysis. This chain is ATP-dependent protease ATPase subunit HslU, found in Roseobacter denitrificans (strain ATCC 33942 / OCh 114) (Erythrobacter sp. (strain OCh 114)).